Consider the following 188-residue polypeptide: Mitochondrial import receptor subunit TOM20-1 (188 aa).

Over 1-164 (MDKLNFFEEI…VVKNKKSSDE (164 aa)) the chain is Cytoplasmic. A helical transmembrane segment spans residues 165-182 (KYIVMGWVILAIGVVACI). Residues 183 to 188 (SFRKLR) are Mitochondrial intermembrane-facing.

Belongs to the Tom20 family. In terms of assembly, forms part of the preprotein translocase complex of the outer mitochondrial membrane (TOM complex) which consists of at least 6 different proteins (TOM5, TOM6, TOM7, TOM20, TOM22/TOM9 and TOM40). Component of a mitochondrial large protein complex that contains, at least, MIC60, DGS1, TOM40, TOM20 proteins, and petC/RISP. In terms of tissue distribution, barely detected in roots.

The protein resides in the mitochondrion outer membrane. Its function is as follows. Central component of the receptor complex responsible for the recognition and translocation of cytosolically synthesized mitochondrial preproteins. Together with TOM22 functions as the transit peptide receptor at the surface of the mitochondrion outer membrane and facilitates the movement of preproteins into the translocation pore. The sequence is that of Mitochondrial import receptor subunit TOM20-1 from Arabidopsis thaliana (Mouse-ear cress).